The chain runs to 279 residues: tRNA (guanine-N(1)-)-methyltransferase (279 aa).

Residues G132 and 152–157 contribute to the S-adenosyl-L-methionine site; that span reads IGDYVL.

This sequence belongs to the RNA methyltransferase TrmD family. Homodimer.

The protein localises to the cytoplasm. It carries out the reaction guanosine(37) in tRNA + S-adenosyl-L-methionine = N(1)-methylguanosine(37) in tRNA + S-adenosyl-L-homocysteine + H(+). Functionally, specifically methylates guanosine-37 in various tRNAs. This is tRNA (guanine-N(1)-)-methyltransferase from Saccharophagus degradans (strain 2-40 / ATCC 43961 / DSM 17024).